Reading from the N-terminus, the 171-residue chain is Putative MucR family transcriptional regulatory protein y4pD (171 aa).

Belongs to the ros/MucR family.

The chain is Putative MucR family transcriptional regulatory protein y4pD from Sinorhizobium fredii (strain NBRC 101917 / NGR234).